The sequence spans 444 residues: 23S rRNA (uracil(1939)-C(5))-methyltransferase RlmD (444 aa).

The 63-residue stretch at 5 to 67 (RNRLDRTPFQ…RHFDEAKTVG (63 aa)) folds into the TRAM domain. Cys80, Cys86, Cys89, and Cys168 together coordinate [4Fe-4S] cluster. S-adenosyl-L-methionine contacts are provided by Gln276, Phe305, Asn310, Glu326, Asp353, and Asp374. Cys400 serves as the catalytic Nucleophile.

It belongs to the class I-like SAM-binding methyltransferase superfamily. RNA M5U methyltransferase family. RlmD subfamily.

It catalyses the reaction uridine(1939) in 23S rRNA + S-adenosyl-L-methionine = 5-methyluridine(1939) in 23S rRNA + S-adenosyl-L-homocysteine + H(+). Catalyzes the formation of 5-methyl-uridine at position 1939 (m5U1939) in 23S rRNA. In Xanthomonas axonopodis pv. citri (strain 306), this protein is 23S rRNA (uracil(1939)-C(5))-methyltransferase RlmD.